The following is a 615-amino-acid chain: Putative binding protein BRA0576/BS1330_II0571 (615 aa).

An N-terminal signal peptide occupies residues 1 to 29 (MLNRFIAFFRSVFLIGLVATAFGALPARA).

The protein belongs to the bacterial solute-binding protein 5 family.

The protein resides in the periplasm. The sequence is that of Putative binding protein BRA0576/BS1330_II0571 from Brucella suis biovar 1 (strain 1330).